The primary structure comprises 129 residues: Thioredoxin H7 (129 aa).

In terms of domain architecture, Thioredoxin spans 6 to 129 (SSVHDVHSSM…LVKKIEQHRV (124 aa)). Residues C55 and C58 each act as nucleophile in the active site. C55 and C58 form a disulfide bridge.

Belongs to the thioredoxin family. Plant H-type subfamily.

The protein localises to the cytoplasm. Probable thiol-disulfide oxidoreductase that may be involved in the redox regulation of a number of cytosolic enzymes. The polypeptide is Thioredoxin H7 (TRX7) (Arabidopsis thaliana (Mouse-ear cress)).